The chain runs to 120 residues: Large ribosomal subunit protein uL18 (120 aa).

The segment at 1-22 is disordered; sequence MKLTRRESKNRRHRRVRGKVVG. Basic residues predominate over residues 8-18; sequence SKNRRHRRVRG.

This sequence belongs to the universal ribosomal protein uL18 family. Part of the 50S ribosomal subunit; part of the 5S rRNA/L5/L18/L25 subcomplex. Contacts the 5S and 23S rRNAs.

Functionally, this is one of the proteins that bind and probably mediate the attachment of the 5S RNA into the large ribosomal subunit, where it forms part of the central protuberance. The protein is Large ribosomal subunit protein uL18 of Nostoc punctiforme (strain ATCC 29133 / PCC 73102).